The sequence spans 120 residues: Small ribosomal subunit protein bS16 (120 aa).

Residues 81 to 120 (GLAKRPARNNPQKAEPGEKSKERAAKRAEKAAAPAEDAAA) form a disordered region. Residues 95–110 (EPGEKSKERAAKRAEK) are compositionally biased toward basic and acidic residues. Low complexity predominate over residues 111–120 (AAAPAEDAAA).

This sequence belongs to the bacterial ribosomal protein bS16 family.

The chain is Small ribosomal subunit protein bS16 from Methylorubrum populi (strain ATCC BAA-705 / NCIMB 13946 / BJ001) (Methylobacterium populi).